Here is a 734-residue protein sequence, read N- to C-terminus: Photosystem I P700 chlorophyll a apoprotein A2 (734 aa).

8 helical membrane passes run 46–69, 135–158, 175–199, 273–291, 330–353, 369–395, 417–439, and 517–535; these read IFASHFGQLAIIFLWTSGNLFHVA, LYTGALFLLFLSAISLIAGWLHLQ, LNHHLSGLFGVSSLAWTGHLVHVAI, IAHHHLAIAFIFLVAGHMY, LHFQLGLALASLGVITSLVAQHMY, AALYTHHQYIAGFIMTGAFAHGAIFFI, AIISHLSWASLFLGFHTLGLYVH, and FLVHHAIALGLHTTTLILV. Positions 559 and 568 each coordinate [4Fe-4S] cluster. Helical transmembrane passes span 575–596 and 643–665; these read AFYLAVFWMLNTIGWVTFYWHW and LSVWAWMFLFGHLVWATGFMFLI. Chlorophyll a contacts are provided by His-654, Met-662, and Tyr-670. Residue Trp-671 coordinates phylloquinone. Residues 707 to 727 form a helical membrane-spanning segment; sequence LVGLAHFSVGYIFTYAAFLIA.

Belongs to the PsaA/PsaB family. In terms of assembly, the PsaA/B heterodimer binds the P700 chlorophyll special pair and subsequent electron acceptors. PSI consists of a core antenna complex that captures photons, and an electron transfer chain that converts photonic excitation into a charge separation. The eukaryotic PSI reaction center is composed of at least 11 subunits. P700 is a chlorophyll a/chlorophyll a' dimer, A0 is one or more chlorophyll a, A1 is one or both phylloquinones and FX is a shared 4Fe-4S iron-sulfur center. serves as cofactor.

It localises to the plastid. The protein localises to the chloroplast thylakoid membrane. It carries out the reaction reduced [plastocyanin] + hnu + oxidized [2Fe-2S]-[ferredoxin] = oxidized [plastocyanin] + reduced [2Fe-2S]-[ferredoxin]. In terms of biological role, psaA and PsaB bind P700, the primary electron donor of photosystem I (PSI), as well as the electron acceptors A0, A1 and FX. PSI is a plastocyanin-ferredoxin oxidoreductase, converting photonic excitation into a charge separation, which transfers an electron from the donor P700 chlorophyll pair to the spectroscopically characterized acceptors A0, A1, FX, FA and FB in turn. Oxidized P700 is reduced on the lumenal side of the thylakoid membrane by plastocyanin. The polypeptide is Photosystem I P700 chlorophyll a apoprotein A2 (Solanum bulbocastanum (Wild potato)).